Here is a 327-residue protein sequence, read N- to C-terminus: Biotin synthase (327 aa).

A Radical SAM core domain is found at 49–282; that stretch reads FNKEKIDLCS…NKVIRLCGGR (234 aa). C67, C71, and C74 together coordinate [4Fe-4S] cluster. The [2Fe-2S] cluster site is built by S110, C142, C201, and R277.

It belongs to the radical SAM superfamily. Biotin synthase family. In terms of assembly, homodimer. The cofactor is [4Fe-4S] cluster. Requires [2Fe-2S] cluster as cofactor.

It catalyses the reaction (4R,5S)-dethiobiotin + (sulfur carrier)-SH + 2 reduced [2Fe-2S]-[ferredoxin] + 2 S-adenosyl-L-methionine = (sulfur carrier)-H + biotin + 2 5'-deoxyadenosine + 2 L-methionine + 2 oxidized [2Fe-2S]-[ferredoxin]. It functions in the pathway cofactor biosynthesis; biotin biosynthesis; biotin from 7,8-diaminononanoate: step 2/2. Functionally, catalyzes the conversion of dethiobiotin (DTB) to biotin by the insertion of a sulfur atom into dethiobiotin via a radical-based mechanism. This is Biotin synthase from Methanococcus maripaludis (strain DSM 14266 / JCM 13030 / NBRC 101832 / S2 / LL).